Reading from the N-terminus, the 247-residue chain is Vacuolar iron transporter 1 (247 aa).

The Cytoplasmic portion of the chain corresponds to 1–33 (MVIAGVSPPTPSSENLLQEHEEKHFTATDVVRD). Residues 34–54 (VIIGVSDGLTVPFALAAGLSG) form a helical membrane-spanning segment. Residues 55–60 (ANVPSS) are Vacuolar-facing. Residues 61–81 (LILTAGIAEVAAGAISMGLGG) form a helical membrane-spanning segment. The Cytoplasmic portion of the chain corresponds to 82–167 (YLAAKSEEDH…PRRALESAMT (86 aa)). Positions 99, 102, 110, 113, 146, and 150 each coordinate Fe cation. Residues 168–188 (IALAYVVGGLVPLSPYFFIPF) form a helical membrane-spanning segment. Residues 189–191 (AKQ) are Vacuolar-facing. A helical membrane pass occupies residues 192-212 (AMITSIAVTLLALVVFGYIKG). Residues 213 to 219 (RFTGSNP) are Cytoplasmic-facing. Residues 220–240 (VLSSIQTAIIGALASAAAYAM) form a helical membrane-spanning segment. The Vacuolar segment spans residues 241 to 247 (AKAVQSV).

This sequence belongs to the CCC1 family. As to expression, expressed at high levels in the blue epidermal cells of the inner bottom part of the petal (at protein level). No detectable expression in parenchyma and epidermis of the purple segments of the petal, parenchyma of the blue segments, leaf, stem, bulb and root (at protein level). High levels of mRNA in the blue epidermal cells of the inner bottom part of the petal. Low-levels of mRNA in the purple segments of the petal, stem, leaf, root, bulb and pistil.

The protein resides in the vacuole membrane. It carries out the reaction Fe(2+)(in) = Fe(2+)(out). In terms of biological role, vacuolar iron transporter involved in the transfer of iron ions from the cytosol to the vacuole for intracellular iron storage. Plays an essential role in the development of blue coloration in tulip petals most likely due to the accumulation of ferrous ions that can form complexes with anthocyanins. The polypeptide is Vacuolar iron transporter 1 (Tulipa gesneriana (Garden tulip)).